A 3462-amino-acid polypeptide reads, in one-letter code: DNA-directed RNA polymerase subunit beta'' (3462 aa).

4 residues coordinate Zn(2+): C263, C335, C342, and C345. Positions 541–1085 (KIDDQELSSV…PNKIFSSNLF (545 aa)) are insert-1. Residues 1528–1585 (PQSANERKQILKKARQKLRLFPLNLNEKKNRFSSVTLDLLRDQTTLHKMQSCGEAESG) are insert-2. Residues 1602-1699 (KKITEIFTFC…FSKQMGNRLL (98 aa)) form an insert-3 region. The insert-4 stretch occupies residues 1938-2168 (LKNKMNQSFS…SQASWILETN (231 aa)). The tract at residues 2320–2870 (NLVSGKLNFL…KKKIAKEGAF (551 aa)) is insert-5. The tract at residues 2972–3196 (SKSQRGWFHN…IGQLLRYGKE (225 aa)) is insert-6.

This sequence belongs to the RNA polymerase beta' chain family. RpoC2 subfamily. In plastids the minimal PEP RNA polymerase catalytic core is composed of four subunits: alpha, beta, beta', and beta''. When a (nuclear-encoded) sigma factor is associated with the core the holoenzyme is formed, which can initiate transcription. Requires Zn(2+) as cofactor.

Its subcellular location is the plastid. The protein resides in the chloroplast. The catalysed reaction is RNA(n) + a ribonucleoside 5'-triphosphate = RNA(n+1) + diphosphate. Functionally, DNA-dependent RNA polymerase catalyzes the transcription of DNA into RNA using the four ribonucleoside triphosphates as substrates. The chain is DNA-directed RNA polymerase subunit beta'' from Tupiella akineta (Green alga).